Consider the following 83-residue polypeptide: Small ribosomal subunit protein bS16 (83 aa).

Belongs to the bacterial ribosomal protein bS16 family.

This is Small ribosomal subunit protein bS16 from Pseudomonas aeruginosa (strain UCBPP-PA14).